A 193-amino-acid chain; its full sequence is Pre-histone-like nucleoprotein (193 aa).

An N-acetylserine; by host modification is found at Ser-2. Residues 2–24 (SIFISPSNNTGWGLRAPSKMYGG) constitute a propeptide that is removed on maturation. N6-acetyllysine; by host is present on Lys-48. Residue Thr-55 is modified to Phosphothreonine; by host. The Nuclear localization signal signature appears at 183–193 (RVPVRTRPPRT).

It belongs to the adenoviridae histone-like nucleoprotein family. Interacts with the core-capsid bridging protein; this interaction bridges the virus core to the capsid. Interacts with host NPM1; this interaction might play a role in placing the pre-histone-like nucleoprotein on the viral DNA or regulating viral gene expression. Interacts with host HMGB1; this interaction inhibits host immune response. In terms of processing, cleaved near the N-terminus by the viral protease during virion maturation to form the mature protein.

Its subcellular location is the virion. The protein resides in the host nucleus. It localises to the host nucleolus. In terms of biological role, plays a role in the inhibition of host immune response within the nucleus. Interacts with cellular nucleosomes and immobilizes the host immune danger signal HMGB1 on chromatin. In turn, prevents HMGB1 release out of the cell and thus decreases inflammation. Also plays a role in the wrapping and condensation of the viral DNA. May also promote viral genome import into the nucleus. The chain is Pre-histone-like nucleoprotein from Homo sapiens (Human).